The following is a 192-amino-acid chain: Adenylate kinase (192 aa).

10–15 is a binding site for ATP; sequence GAGKGT. An NMP region spans residues 30–59; sequence STGDMLRAAVAQATEVGKRAKAVMDAGQLV. Residues Thr-31, Arg-36, 57–59, 85–88, and Gln-92 contribute to the AMP site; these read QLV and GYPR. The LID stretch occupies residues 126-142; that stretch reads NRVAETVAAGGTVRSDD. Arg-127 serves as a coordination point for ATP. AMP is bound by residues Arg-139 and Arg-150. Residue Ala-178 coordinates ATP.

The protein belongs to the adenylate kinase family. As to quaternary structure, monomer.

The protein resides in the cytoplasm. The enzyme catalyses AMP + ATP = 2 ADP. It participates in purine metabolism; AMP biosynthesis via salvage pathway; AMP from ADP: step 1/1. In terms of biological role, catalyzes the reversible transfer of the terminal phosphate group between ATP and AMP. Plays an important role in cellular energy homeostasis and in adenine nucleotide metabolism. This Sinorhizobium medicae (strain WSM419) (Ensifer medicae) protein is Adenylate kinase.